We begin with the raw amino-acid sequence, 428 residues long: GTPase Obg (428 aa).

An Obg domain is found at 1 to 158 (MFVDQVQVEV…RFIKLELKVL (158 aa)). The 175-residue stretch at 159–333 (ADVGLVGFPS…LMHKTAEVLK (175 aa)) folds into the OBG-type G domain. Residues 165–172 (GFPSVGKS), 190–194 (FTTLV), 212–215 (DLPG), 282–285 (TKMD), and 314–316 (SSL) each bind GTP. Mg(2+) contacts are provided by S172 and T192. An OCT domain is found at 350–428 (YKYQPEPALK…IDDFTFEFVE (79 aa)).

It belongs to the TRAFAC class OBG-HflX-like GTPase superfamily. OBG GTPase family. In terms of assembly, monomer. Mg(2+) serves as cofactor.

The protein localises to the cytoplasm. In terms of biological role, an essential GTPase which binds GTP, GDP and possibly (p)ppGpp with moderate affinity, with high nucleotide exchange rates and a fairly low GTP hydrolysis rate. Plays a role in control of the cell cycle, stress response, ribosome biogenesis and in those bacteria that undergo differentiation, in morphogenesis control. The polypeptide is GTPase Obg (Lacticaseibacillus paracasei (strain ATCC 334 / BCRC 17002 / CCUG 31169 / CIP 107868 / KCTC 3260 / NRRL B-441) (Lactobacillus paracasei)).